Here is a 78-residue protein sequence, read N- to C-terminus: Calcium/calmodulin-dependent protein kinase II inhibitor 1 (78 aa).

A CAMK2 inhibitory domain region spans residues 41–68; the sequence is NKRPPKLGQIGRSKRVVIEDDRIDDVLK.

The protein belongs to the CAMK2N family. Interacts with CAMK2B; the presence of Ca(2+)/calmodulin increases the interaction but is not essential. Interacts with CAMK2A; this interaction requires CAMK2A activation by Ca(2+).

The protein localises to the synapse. Its subcellular location is the cell projection. It is found in the dendrite. The protein resides in the postsynaptic density. Its function is as follows. Potent and specific inhibitor of CaM-kinase II (CAMK2). Plays a role in the maintenance of long-term retrieval-induced memory in response to contextual fear. Modulates blood pressure and vascular reactivity via regulation of CAMK2 activity in addition to regulation of left ventricular mass. Mediates the NLRP3 inflammasome in cardiomyocytes via acting as an inhibitor of the MAPK14/p38 and MAPK8/JNK pathways, thereby regulating ventricular remodeling and cardiac rhythm post-myocardial infarction. Negatively effects insulin sensitivity and promotes lipid formation in adipose tissues independent of CAMK2 signaling. The chain is Calcium/calmodulin-dependent protein kinase II inhibitor 1 (CAMK2N1) from Homo sapiens (Human).